A 276-amino-acid chain; its full sequence is Mitochondrial outer membrane protein porin 1 (276 aa).

The protein belongs to the eukaryotic mitochondrial porin (TC 1.B.8.1) family. Expressed in shoot meristems, root meristematic zone, lateral roots, leaves, stigma and anthers.

It localises to the mitochondrion outer membrane. Forms a channel through the mitochondrial outer membrane that allows diffusion of small hydrophilic molecules. The channel adopts an open conformation at low or zero membrane potential and a closed conformation at potentials above 30-40 mV. The open state has a weak anion selectivity whereas the closed state is cation-selective. Involved in plant development at reproductive stage, is important for pollen development and may regulate hydrogen peroxide generation during disease resistance. In Arabidopsis thaliana (Mouse-ear cress), this protein is Mitochondrial outer membrane protein porin 1 (VDAC1).